Reading from the N-terminus, the 335-residue chain is Tetraacyldisaccharide 4'-kinase (335 aa).

58–65 (TVGGVGKT) serves as a coordination point for ATP.

Belongs to the LpxK family.

The enzyme catalyses a lipid A disaccharide + ATP = a lipid IVA + ADP + H(+). It participates in glycolipid biosynthesis; lipid IV(A) biosynthesis; lipid IV(A) from (3R)-3-hydroxytetradecanoyl-[acyl-carrier-protein] and UDP-N-acetyl-alpha-D-glucosamine: step 6/6. In terms of biological role, transfers the gamma-phosphate of ATP to the 4'-position of a tetraacyldisaccharide 1-phosphate intermediate (termed DS-1-P) to form tetraacyldisaccharide 1,4'-bis-phosphate (lipid IVA). The protein is Tetraacyldisaccharide 4'-kinase of Caulobacter sp. (strain K31).